We begin with the raw amino-acid sequence, 272 residues long: Cytosolic Fe-S cluster assembly factor NUBP2 (272 aa).

23–30 (GKGGVGKS) lines the ATP pocket. The [4Fe-4S] cluster site is built by Cys197 and Cys200.

The protein belongs to the Mrp/NBP35 ATP-binding proteins family. NUBP2/CFD1 subfamily. In terms of assembly, heterotetramer of 2 NUBP1 and 2 NUBP2 chains. Requires [4Fe-4S] cluster as cofactor.

The protein localises to the cytoplasm. Its function is as follows. Component of the cytosolic iron-sulfur (Fe/S) protein assembly (CIA) machinery. Required for maturation of extramitochondrial Fe-S proteins. The NUBP1-NUBP2 heterotetramer forms a Fe-S scaffold complex, mediating the de novo assembly of an Fe-S cluster and its transfer to target apoproteins. In Gallus gallus (Chicken), this protein is Cytosolic Fe-S cluster assembly factor NUBP2.